The chain runs to 313 residues: Beta-ketoacyl-[acyl-carrier-protein] synthase III (313 aa).

Residues Cys-112 and His-238 contribute to the active site. The ACP-binding stretch occupies residues 239-243 (QANIR). Asn-268 is a catalytic residue.

It belongs to the thiolase-like superfamily. FabH family. As to quaternary structure, homodimer.

Its subcellular location is the cytoplasm. It carries out the reaction malonyl-[ACP] + acetyl-CoA + H(+) = 3-oxobutanoyl-[ACP] + CO2 + CoA. It participates in lipid metabolism; fatty acid biosynthesis. Catalyzes the condensation reaction of fatty acid synthesis by the addition to an acyl acceptor of two carbons from malonyl-ACP. Catalyzes the first condensation reaction which initiates fatty acid synthesis and may therefore play a role in governing the total rate of fatty acid production. Possesses both acetoacetyl-ACP synthase and acetyl transacylase activities. Its substrate specificity determines the biosynthesis of branched-chain and/or straight-chain of fatty acids. The sequence is that of Beta-ketoacyl-[acyl-carrier-protein] synthase III from Staphylococcus saprophyticus subsp. saprophyticus (strain ATCC 15305 / DSM 20229 / NCIMB 8711 / NCTC 7292 / S-41).